A 212-amino-acid polypeptide reads, in one-letter code: Orotate phosphoribosyltransferase (212 aa).

5-phospho-alpha-D-ribose 1-diphosphate-binding positions include Arg-95, Lys-99, His-101, and 121–129 (DDLITTGGS). Thr-125 lines the orotate pocket.

It belongs to the purine/pyrimidine phosphoribosyltransferase family. PyrE subfamily. Homodimer. Mg(2+) is required as a cofactor.

It carries out the reaction orotidine 5'-phosphate + diphosphate = orotate + 5-phospho-alpha-D-ribose 1-diphosphate. The protein operates within pyrimidine metabolism; UMP biosynthesis via de novo pathway; UMP from orotate: step 1/2. Functionally, catalyzes the transfer of a ribosyl phosphate group from 5-phosphoribose 1-diphosphate to orotate, leading to the formation of orotidine monophosphate (OMP). This is Orotate phosphoribosyltransferase from Lactobacillus johnsonii (strain CNCM I-12250 / La1 / NCC 533).